Here is a 184-residue protein sequence, read N- to C-terminus: Ribosome-recycling factor (184 aa).

It belongs to the RRF family.

It localises to the cytoplasm. In terms of biological role, responsible for the release of ribosomes from messenger RNA at the termination of protein biosynthesis. May increase the efficiency of translation by recycling ribosomes from one round of translation to another. The chain is Ribosome-recycling factor from Lachnoclostridium phytofermentans (strain ATCC 700394 / DSM 18823 / ISDg) (Clostridium phytofermentans).